Here is a 336-residue protein sequence, read N- to C-terminus: Fructose-1,6-bisphosphatase class 1 (336 aa).

The Mg(2+) site is built by Glu-90, Asp-112, Leu-114, and Asp-115. Residues Asp-115–Ser-118, Asn-211, and Lys-277 contribute to the substrate site. Residue Glu-283 participates in Mg(2+) binding.

The protein belongs to the FBPase class 1 family. Homotetramer. Mg(2+) serves as cofactor.

The protein resides in the cytoplasm. The enzyme catalyses beta-D-fructose 1,6-bisphosphate + H2O = beta-D-fructose 6-phosphate + phosphate. It participates in carbohydrate biosynthesis; gluconeogenesis. The polypeptide is Fructose-1,6-bisphosphatase class 1 (Pseudomonas putida (strain W619)).